The chain runs to 461 residues: Photosystem II CP43 reaction center protein (461 aa).

Residues 1–2 constitute a propeptide that is removed on maturation; the sequence is ME. Residue Thr-3 is modified to N-acetylthreonine. A Phosphothreonine modification is found at Thr-3. A run of 5 helical transmembrane segments spans residues 57–81, 122–143, 166–188, 243–263, and 279–300; these read LFEVAHFVPEKPMYEQGLILLPHLA, LLGPETLEESFPFFGYVWKDRN, KALYFGGVYDTWAPGGGDVRKIT, KPFAWARRALVWSGEAYLSYS, and WFNNTAYPSEFYGPTGPEASQA. [CaMn4O5] cluster is bound at residue Glu-355. Residues 435 to 459 form a helical membrane-spanning segment; that stretch reads RARAAAAGFEKGIDRDLEPVLFMTP.

The protein belongs to the PsbB/PsbC family. PsbC subfamily. PSII is composed of 1 copy each of membrane proteins PsbA, PsbB, PsbC, PsbD, PsbE, PsbF, PsbH, PsbI, PsbJ, PsbK, PsbL, PsbM, PsbT, PsbX, PsbY, PsbZ, Psb30/Ycf12, at least 3 peripheral proteins of the oxygen-evolving complex and a large number of cofactors. It forms dimeric complexes. Binds multiple chlorophylls and provides some of the ligands for the Ca-4Mn-5O cluster of the oxygen-evolving complex. It may also provide a ligand for a Cl- that is required for oxygen evolution. PSII binds additional chlorophylls, carotenoids and specific lipids. serves as cofactor.

Its subcellular location is the plastid. The protein resides in the chloroplast thylakoid membrane. Functionally, one of the components of the core complex of photosystem II (PSII). It binds chlorophyll and helps catalyze the primary light-induced photochemical processes of PSII. PSII is a light-driven water:plastoquinone oxidoreductase, using light energy to abstract electrons from H(2)O, generating O(2) and a proton gradient subsequently used for ATP formation. The polypeptide is Photosystem II CP43 reaction center protein (Nandina domestica (Heavenly bamboo)).